Here is a 574-residue protein sequence, read N- to C-terminus: Adenine deaminase (574 aa).

It belongs to the metallo-dependent hydrolases superfamily. Adenine deaminase family. Requires Mn(2+) as cofactor.

It catalyses the reaction adenine + H2O + H(+) = hypoxanthine + NH4(+). The polypeptide is Adenine deaminase (Thermosipho melanesiensis (strain DSM 12029 / CIP 104789 / BI429)).